A 2048-amino-acid chain; its full sequence is Myoferlin (2048 aa).

Residues 1 to 101 (MLRVIVESAT…IGDQNRSLPY (101 aa)) form the C2 1 domain. At 1-2012 (MLRVIVESAT…MRFIVWRRFK (2012 aa)) the chain is on the cytoplasmic side. The interval 124–176 (YTPPSAPHPNDPSGTSVPGMGEEEEEDQGDEDRVDGIVRGPGPKGPSGTVSEA) is disordered. Over residues 144 to 156 (GEEEEEDQGDEDR) the composition is skewed to acidic residues. Residues Ser170 and Ser174 each carry the phosphoserine modification. C2 domains are found at residues 183-300 (TKGK…RKWL) and 339-475 (DSDD…EATT). The segment at 186–281 (KSSRRMLSNK…RADCLMGEFK (96 aa)) is necessary for interaction with EHD2. Positions 390, 396, 444, 446, and 452 each coordinate Ca(2+). Lys540 and Lys871 each carry N6-acetyllysine. 2 C2 domains span residues 1110–1238 (GANT…LLWH) and 1269–1397 (LPSQ…GKED). Asp1142, Asp1148, Asp1204, and Asp1206 together coordinate Ca(2+). Lys1494 is subject to N6-acetyllysine. C2 domains are found at residues 1523–1641 (PAPP…SHCG) and 1759–1907 (GPPG…EKCS). Positions 1556, 1562, 1611, 1613, 1878, 1881, and 1884 each coordinate Ca(2+). Positions 1964–1975 (EADERPAGKGRS) are enriched in basic and acidic residues. The disordered stretch occupies residues 1964 to 1986 (EADERPAGKGRSEPNMNPKLDPP). A helical transmembrane segment spans residues 2013 to 2033 (WVIIGLLLLLILLLFVAVLLY). Topologically, residues 2034 to 2048 (SLPNYLSMKIVRPNA) are extracellular.

This sequence belongs to the ferlin family. In terms of assembly, interacts with EHD1. Interacts with EHD2; the interaction is direct. Interacts with DNM2 and KDR. Interacts with RIPOR2. Ca(2+) is required as a cofactor. In terms of tissue distribution, expressed in myoblasts (at protein level). Expressed in endothelial cells.

It localises to the cell membrane. The protein resides in the nucleus membrane. Its subcellular location is the cytoplasmic vesicle membrane. Its function is as follows. Calcium/phospholipid-binding protein that plays a role in the plasmalemma repair mechanism of endothelial cells that permits rapid resealing of membranes disrupted by mechanical stress. Involved in endocytic recycling. Implicated in VEGF signal transduction by regulating the levels of the receptor KDR. This is Myoferlin (Myof) from Mus musculus (Mouse).